Here is a 295-residue protein sequence, read N- to C-terminus: Glycine N-acyltransferase-like protein Keg1 (295 aa).

An N6-acetyllysine; alternate modification is found at K41. K41 carries the N6-succinyllysine; alternate modification. At K43 the chain carries N6-acetyllysine. Position 48 is an N6-acetyllysine; alternate (K48). K48 bears the N6-succinyllysine; alternate mark. N6-acetyllysine is present on residues K80 and K83. K124, K128, and K140 each carry N6-acetyllysine; alternate. K124, K128, and K140 each carry N6-succinyllysine; alternate. K150 carries the post-translational modification N6-acetyllysine. An N6-acetyllysine; alternate modification is found at K255. K255 is subject to N6-succinyllysine; alternate.

It belongs to the glycine N-acyltransferase family. As to quaternary structure, binds to microtubules. Specifically expressed in kidney and liver. Up-regulated in the regenerating liver as well as in hepatocellular carcinoma.

It localises to the cytoplasm. Its subcellular location is the cytoskeleton. The protein localises to the microtubule organizing center. It is found in the centrosome. The enzyme catalyses an acyl-CoA + glycine = an N-acylglycine + CoA + H(+). Functionally, acyltransferase which transfers the acyl group to the N-terminus of glycine. Can conjugate a multitude of substrates to form a variety of N-acylglycines. The protein is Glycine N-acyltransferase-like protein Keg1 (Keg1) of Rattus norvegicus (Rat).